The following is a 466-amino-acid chain: Catalase ifgD (466 aa).

Positions 1–22 (MAPNYAKKCPVMGKAPSSGHSS) are disordered. Histidine 48 is an active-site residue. Residue tyrosine 337 participates in heme binding.

It belongs to the catalase family. Requires heme as cofactor.

It participates in alkaloid biosynthesis; ergot alkaloid biosynthesis. Its function is as follows. Catalase; part of the gene cluster that mediates the biosynthesis of isofumigaclavines, fungal ergot alkaloids. The tryptophan dimethylallyltransferase ifgA catalyzes the first step of ergot alkaloid biosynthesis by condensing dimethylallyl diphosphate (DMAP) and tryptophan to form 4-dimethylallyl-L-tryptophan. The second step is catalyzed by the methyltransferase ifgB that methylates 4-dimethylallyl-L-tryptophan in the presence of S-adenosyl-L-methionine, resulting in the formation of N-methyl-dimethylallyl-L-tryptophan. The catalase ifgD and the FAD-dependent oxidoreductase ifgC then transform N-methyl-dimethylallyl-L-tryptophan to chanoclavine-I which is further oxidized by ifgE in the presence of NAD(+), resulting in the formation of chanoclavine-I aldehyde. The chanoclavine-I aldehyde reductases ifgG and/or fgaOx3 reduce chanoclavine-I aldehyde to dihydrochanoclavine-I aldehyde that spontaneously dehydrates to form 6,8-dimethyl-6,7-didehydroergoline. The festuclavine dehydrogenases ifgF1 and/or ifgF2 then catalyze the reduction of 6,8-dimethyl-6,7-didehydroergoline to form festuclavine. Hydrolysis of festuclavine by a yet undetermined cytochrome P450 monooxygenase (called ifgH) then leads to the formation of isofumigaclavine B which is in turn acetylated by ifgI to isofumigaclavine A. Penicillium roqueforti has interestingly at least two sets of genes for the consumption of chanoclavine-I aldehyde on three different loci, the OYEs ifgG/fgaOx3 and the festuclavine synthase homologs ifgF1/ifgF2. The reason for the duplication of these genes is unclear, probably to ensure the conversion of chanoclavine-I aldehyde by differential gene expression under various environmental conditions. The protein is Catalase ifgD of Penicillium roqueforti (strain FM164).